A 495-amino-acid chain; its full sequence is Probable serine/threonine-protein kinase DDB_G0292354 (495 aa).

The region spanning 16–275 (WTVVKKIGQG…PNYVFLQTLL (260 aa)) is the Protein kinase domain. ATP contacts are provided by residues 22 to 30 (IGQGAFGEI) and Lys-45. Asp-136 (proton acceptor) is an active-site residue. Positions 293 to 469 (EVQTNSGASS…NGNGSNSQPI (177 aa)) are disordered. 2 stretches are compositionally biased toward low complexity: residues 295–333 (QTNSGASSSSSNTTQQQQQQQQQQQQRNLNQSGLNNSSA) and 354–364 (NNSNNNNNNNN). Positions 385–395 (ESNSQIANSSE) are enriched in polar residues. Residues 435 to 466 (SNNNNINNNNNNYNNNNNNNNNSHMNGNGSNS) show a composition bias toward low complexity.

The protein belongs to the protein kinase superfamily. CK1 Ser/Thr protein kinase family.

This chain is Probable serine/threonine-protein kinase DDB_G0292354, found in Dictyostelium discoideum (Social amoeba).